Reading from the N-terminus, the 241-residue chain is Large ribosomal subunit protein uL1 (241 aa).

This sequence belongs to the universal ribosomal protein uL1 family. As to quaternary structure, part of the 50S ribosomal subunit.

Its function is as follows. Binds directly to 23S rRNA. The L1 stalk is quite mobile in the ribosome, and is involved in E site tRNA release. Protein L1 is also a translational repressor protein, it controls the translation of the L11 operon by binding to its mRNA. The protein is Large ribosomal subunit protein uL1 of Thermomicrobium roseum (strain ATCC 27502 / DSM 5159 / P-2).